The chain runs to 91 residues: Non-specific lipid-transfer protein P3 (91 aa).

Cystine bridges form between C3/C50, C13/C27, C28/C73, and C48/C87.

Its subcellular location is the secreted. Functionally, plant non-specific lipid-transfer proteins transfer phospholipids as well as galactolipids across membranes. May play a role in wax or cutin deposition in the cell walls of expanding epidermal cells and certain secretory tissues. This Vitis sp. (Grape) protein is Non-specific lipid-transfer protein P3.